A 575-amino-acid polypeptide reads, in one-letter code: Serine/threonine-protein kinase YPK1 (575 aa).

Residues Met1–Pro53 are disordered. Residues Ser23–Thr38 show a composition bias toward low complexity. The Protein kinase domain occupies Phe245 to Phe500. ATP contacts are provided by residues Ile251 to Val259 and Lys274. The Proton acceptor role is filled by Asp368. The 72-residue stretch at Lys502–Gly573 folds into the AGC-kinase C-terminal domain. Phosphoserine is present on residues Ser543 and Ser562.

This sequence belongs to the protein kinase superfamily. AGC Ser/Thr protein kinase family. RAC subfamily.

The enzyme catalyses L-seryl-[protein] + ATP = O-phospho-L-seryl-[protein] + ADP + H(+). It catalyses the reaction L-threonyl-[protein] + ATP = O-phospho-L-threonyl-[protein] + ADP + H(+). Probable serine/threonine-protein kinase which may act in the sphingolipid-mediated signaling pathway. May act downstream of TORC2 (TOR complex 2) and PDK1 to regulate sphingolipid metabolism. The sequence is that of Serine/threonine-protein kinase YPK1 from Cryptococcus neoformans var. grubii serotype A (strain H99 / ATCC 208821 / CBS 10515 / FGSC 9487) (Filobasidiella neoformans var. grubii).